The chain runs to 395 residues: F-box/kelch-repeat protein At3g13680 (395 aa).

The region spanning 1 to 47 is the F-box domain; that stretch reads MTTMGDLPGDLVEEILSRVPLTSLRAIRSTCQKWNSLSKSQICGRKA. Kelch repeat units follow at residues 154 to 202, 210 to 256, 265 to 314, and 337 to 383; these read ILRI…SLKG, KKET…VSLA, VLYQ…FIDE, and IVYI…LVQL.

The protein is F-box/kelch-repeat protein At3g13680 of Arabidopsis thaliana (Mouse-ear cress).